The chain runs to 304 residues: UDP-3-O-acyl-N-acetylglucosamine deacetylase (304 aa).

Zn(2+)-binding residues include His-78, His-237, and Asp-241. His-264 acts as the Proton donor in catalysis.

It belongs to the LpxC family. Zn(2+) is required as a cofactor.

The enzyme catalyses a UDP-3-O-[(3R)-3-hydroxyacyl]-N-acetyl-alpha-D-glucosamine + H2O = a UDP-3-O-[(3R)-3-hydroxyacyl]-alpha-D-glucosamine + acetate. The protein operates within glycolipid biosynthesis; lipid IV(A) biosynthesis; lipid IV(A) from (3R)-3-hydroxytetradecanoyl-[acyl-carrier-protein] and UDP-N-acetyl-alpha-D-glucosamine: step 2/6. Its function is as follows. Catalyzes the hydrolysis of UDP-3-O-myristoyl-N-acetylglucosamine to form UDP-3-O-myristoylglucosamine and acetate, the committed step in lipid A biosynthesis. The protein is UDP-3-O-acyl-N-acetylglucosamine deacetylase of Polynucleobacter asymbioticus (strain DSM 18221 / CIP 109841 / QLW-P1DMWA-1) (Polynucleobacter necessarius subsp. asymbioticus).